We begin with the raw amino-acid sequence, 634 residues long: UPF0329 protein ECU11_2090 (634 aa).

2 stretches are compositionally biased toward basic and acidic residues: residues 354–365 and 397–407; these read REEREKREESKG and GESKEEDRGEE. Residues 354 to 438 form a disordered region; it reads REEREKREES…KGSGEKRISE (85 aa). Positions 408 to 417 are enriched in acidic residues; sequence GGVEAEDPLE.

Belongs to the UPF0329 family.

This is UPF0329 protein ECU11_2090 from Encephalitozoon cuniculi (strain GB-M1) (Microsporidian parasite).